Consider the following 3117-residue polypeptide: Centrosome-associated protein 350 (3117 aa).

The disordered stretch occupies residues 1–24; sequence MRSSKSKEVPLPNPRNSQSKDTVQ. Residues 14 to 24 show a composition bias toward polar residues; sequence PRNSQSKDTVQ. Ser86, Ser139, Ser142, and Ser218 each carry phosphoserine. Disordered stretches follow at residues 249 to 275, 436 to 514, 548 to 625, and 671 to 722; these read PKAL…ILKR, ILGP…NKQE, TVEL…TEQK, and LEEP…PPQP. The span at 255–267 shows a compositional bias: low complexity; that stretch reads TDSSPSSTSTSNS. Basic and acidic residues predominate over residues 469 to 501; the sequence is GRAESDPRLDVLHRHLQRNSERSRSKSRSENNI. Ser473 and Ser507 each carry phosphoserine. Residues 563–573 are compositionally biased toward basic residues; that stretch reads PRSHSPVKRKP. Composition is skewed to basic and acidic residues over residues 591–625 and 694–703; these read YDTD…TEQK and ESDKENKVQE. A coiled-coil region spans residues 598–645; sequence QYIVRQQEERKRKQNEEKKAQKEATEQKNKRLQELYRKQKEAFTKVKN. The residue at position 695 (Ser695) is a Phosphoserine. Residues 705–718 are compositionally biased toward low complexity; it reads PPSASSSSDMSLSE. Thr878 is subject to Phosphothreonine. Position 939 is a phosphoserine (Ser939). Low complexity predominate over residues 981–992; the sequence is SVSEGPLLSEGS. Positions 981-1002 are disordered; the sequence is SVSEGPLLSEGSLSEEEGDQDG. Ser1061 carries the post-translational modification Phosphoserine. Residues 1081–1298 form a disordered region; it reads EDKLDRGTST…GFKPNAPLTD (218 aa). Over residues 1087–1102 the composition is skewed to polar residues; the sequence is GTSTSRPLNATATPLS. Residues 1135–1144 are compositionally biased toward basic and acidic residues; it reads QEDHSNRKSA. 2 stretches are compositionally biased toward low complexity: residues 1153 to 1172 and 1251 to 1267; these read TSQH…STSS and QKTP…KSLQ. Thr1253 is subject to Phosphothreonine. A phosphoserine mark is found at Ser1256 and Ser1259. A compositionally biased stretch (polar residues) spans 1272–1283; that stretch reads GTSSERSKSSVM. Residues 1369-1411 are a coiled coil; the sequence is IKAQQQRHERDLALLKLKAEQEALESQRQLEETRNKAAQVHAE. 2 disordered regions span residues 1494-1674 and 1794-1854; these read TRTE…GGQD and KLKS…SRMD. The segment covering 1503–1512 has biased composition (polar residues); the sequence is PSVSLSQSKE. 2 stretches are compositionally biased toward low complexity: residues 1522-1535 and 1543-1556; these read YSAS…SSGY and SSGS…SVPS. Residues 1558 to 1571 are compositionally biased toward basic and acidic residues; it reads KENEKKLNGEKIES. Ser1613 carries the phosphoserine modification. A compositionally biased stretch (basic and acidic residues) spans 1631–1647; the sequence is ESHRRFNMEKRRGHHDD. Residues Ser1648 and Ser1653 each carry the phosphoserine modification. Residues 1707–1800 adopt a coiled-coil conformation; that stretch reads KALKEKTKAE…LQEKLKSAGE (94 aa). Over residues 1794–1815 the composition is skewed to basic and acidic residues; it reads KLKSAGESKLDSHSDDDTKDNK. Ser1818 bears the Phosphoserine mark. Positions 1827-1841 are enriched in low complexity; it reads RSPSPISISSSETSS. Residues 1856-1899 are a coiled coil; that stretch reads KFLTKREQKLMQRRQHAEELLEWKRRLDAEEAEIRQMEKQALAA. A compositionally biased stretch (basic and acidic residues) spans 1903–1925; the sequence is ELIKPKTPKKELEDQRTEQKEIA. Disordered regions lie at residues 1903–2020, 2107–2221, 2329–2356, and 2407–2432; these read ELIK…QCHL, ELSQ…ESGD, LKER…QKNT, and KDSQ…FGSN. A Phosphoserine modification is found at Ser1936. A compositionally biased stretch (polar residues) spans 1983 to 2005; it reads ELESSTSPSKHSLPKSCTSVSKQ. Residues 2051–2110 are a coiled coil; sequence EGRIRALKDELRKRKSVVNQLKKEQKKRQKERLKAQEASLIKQLESYDEFIKKTEAELSQ. The segment covering 2111-2129 has biased composition (polar residues); that stretch reads DLETSPTAKPQIKTLSSAS. A Phosphoserine modification is found at Ser2115. Positions 2141 to 2170 are enriched in basic and acidic residues; it reads HRSETAKNWKSLTESERSRGSLESIAEHVD. Polar residues predominate over residues 2173 to 2184; it reads LSGSERSVSERS. Residues 2191–2201 show a composition bias toward basic and acidic residues; it reads RVNEWDSRTED. Thr2204 carries the phosphothreonine modification. Residue Ser2206 is modified to Phosphoserine. 2 stretches are compositionally biased toward basic and acidic residues: residues 2329 to 2338 and 2407 to 2417; these read LKERQSDQDM and KDSQSCRDKPQ. Over residues 2419-2432 the composition is skewed to polar residues; the sequence is MRSSTSGATSFGSN. Residues Ser2431 and Ser2460 each carry the phosphoserine modification. The segment covering 2465-2478 has biased composition (basic and acidic residues); it reads MKSKERSDVEHEQQ. A disordered region spans residues 2465–2485; that stretch reads MKSKERSDVEHEQQVTESPSL. The CAP-Gly domain maps to 2517–2559; that stretch reads GETSFAKGFWAGVELDKPEGNNNGTYDGIAYFECKEKHGIFAP. A Phosphothreonine modification is found at Thr2689. Residues 2719-2752 adopt a coiled-coil conformation; the sequence is LLDLLTREKNQLEAQLKSSLNEEKKSKQQLEKIS. Phosphoserine is present on residues Ser2830 and Ser2839.

Part of a ternary complex that contains CEP350, CEP43 and MAPRE1. Interacts (via C-terminus) directly with CEP43 (via N-terminus). Interacts with NR1H3, PPARA, PPARD and PPARG. Interacts directly with microtubules. Interacts with the fusion protein CEP43-FGFR1, and by doing so recruits and activates PI3K and PLC-gamma. Interacts with CYLD. Interacts with CFAP157. Interacts with CEP19 (via C-terminus). Interacts with CEP78; promoting CEP78 localization to centrosome and centriole. Post-translationally, phosphorylated during mitosis. Detected in heart, brain, skeletal muscle, testis, placenta, lung, liver, kidney and pancreas.

It localises to the cytoplasm. The protein localises to the cytoskeleton. Its subcellular location is the microtubule organizing center. It is found in the centrosome. The protein resides in the spindle. It localises to the nucleus. The protein localises to the centriole. Its subcellular location is the cilium basal body. Its function is as follows. Plays an essential role in centriole growth by stabilizing a procentriolar seed composed of at least, SASS6 and CPAP. Required for anchoring microtubules to the centrosomes and for the integrity of the microtubule network. Recruits PPARA to discrete subcellular compartments and thereby modulates PPARA activity. Required for ciliation. This is Centrosome-associated protein 350 from Homo sapiens (Human).